Consider the following 464-residue polypeptide: Glycine--tRNA ligase (464 aa).

Substrate contacts are provided by Arg104 and Glu175. Residues 207 to 209 (RNE), 217 to 222 (FRTREF), 292 to 293 (EL), and 336 to 339 (GVNR) contribute to the ATP site. 222-226 (FEQME) lines the substrate pocket. 332–336 (EPALG) serves as a coordination point for substrate.

It belongs to the class-II aminoacyl-tRNA synthetase family. In terms of assembly, homodimer.

The protein resides in the cytoplasm. It catalyses the reaction tRNA(Gly) + glycine + ATP = glycyl-tRNA(Gly) + AMP + diphosphate. Its function is as follows. Catalyzes the attachment of glycine to tRNA(Gly). In Leptospira interrogans serogroup Icterohaemorrhagiae serovar Lai (strain 56601), this protein is Glycine--tRNA ligase.